The chain runs to 115 residues: Large ribosomal subunit protein bL20 (115 aa).

It belongs to the bacterial ribosomal protein bL20 family.

Binds directly to 23S ribosomal RNA and is necessary for the in vitro assembly process of the 50S ribosomal subunit. It is not involved in the protein synthesizing functions of that subunit. This is Large ribosomal subunit protein bL20 from Chlorobaculum parvum (strain DSM 263 / NCIMB 8327) (Chlorobium vibrioforme subsp. thiosulfatophilum).